A 324-amino-acid polypeptide reads, in one-letter code: tRNA dimethylallyltransferase (324 aa).

Residue 17 to 24 participates in ATP binding; it reads GPTASGKT. 19-24 is a binding site for substrate; that stretch reads TASGKT. Interaction with substrate tRNA stretches follow at residues 42–45, 166–170, and 251–256; these read DSAL, QRIQR, and RCVGYR.

The protein belongs to the IPP transferase family. Monomer. Requires Mg(2+) as cofactor.

The enzyme catalyses adenosine(37) in tRNA + dimethylallyl diphosphate = N(6)-dimethylallyladenosine(37) in tRNA + diphosphate. Its function is as follows. Catalyzes the transfer of a dimethylallyl group onto the adenine at position 37 in tRNAs that read codons beginning with uridine, leading to the formation of N6-(dimethylallyl)adenosine (i(6)A). The chain is tRNA dimethylallyltransferase from Burkholderia pseudomallei (strain 1106a).